We begin with the raw amino-acid sequence, 353 residues long: Endophilin-A1 (353 aa).

Positions 1 to 21 (MSVAGLKKQFHKATQKVSEKV) are membrane-binding amphipathic helix. Residues 1 to 27 (MSVAGLKKQFHKATQKVSEKVGGAEGT) form a disordered region. The segment at 1 to 125 (MSVAGLKKQF…DVGEAMKELS (125 aa)) is binds and tubulates liposomes. A BAR domain is found at 18–249 (SEKVGGAEGT…LEDRIKEASS (232 aa)). The required for dimerization upon membrane association stretch occupies residues 60 to 87 (PNPASRAKLSMINTMSKIRGQEKGPGYP). A coiled-coil region spans residues 181–201 (EELRQALEKFDESKEIAESSM). The span at 243–257 (RIKEASSQPKREYQP) shows a compositional bias: basic and acidic residues. Positions 243–290 (RIKEASSQPKREYQPKPRMSLDFTSGGDNTQHNGGISHATTPKPAGAH) are disordered. Positions 264-282 (DFTSGGDNTQHNGGISHAT) are enriched in polar residues. Positions 291-350 (MDQPCCRALYDFEPENEGELGFKEGDIITLTNQIDENWYEGMLHGQSGFFPINYVDILVP) constitute an SH3 domain.

This sequence belongs to the endophilin family. Monomer; in cytoplasm. Homodimer; when associated with membranes. Associates with MAP4K3. This interaction appears to regulate MAP4K3-mediated JNK activation. Interacts with SYNJ1 and DNM1. Highly expressed in brain.

It is found in the cytoplasm. Its subcellular location is the membrane. It localises to the early endosome. The protein localises to the presynapse. Functionally, implicated in synaptic vesicle endocytosis. May recruit other proteins to membranes with high curvature. The sequence is that of Endophilin-A1 from Gallus gallus (Chicken).